Consider the following 45-residue polypeptide: Large ribosomal subunit protein bL34 (45 aa).

The interval 1–27 (MTKRTLGGTSRKRKRVSGFRVRMRSHT) is disordered. The span at 10–27 (SRKRKRVSGFRVRMRSHT) shows a compositional bias: basic residues.

This sequence belongs to the bacterial ribosomal protein bL34 family.

In Synechococcus sp. (strain CC9902), this protein is Large ribosomal subunit protein bL34.